The following is a 488-amino-acid chain: MAKALMLQGTGSDVGKTLIVAGLCRAYMRRGLRVRPFKPQNMSNNAAVTLDGGEIGRAQALQAQACGVPPSVHMNPVLLKPQSGTGSQIILQGRLSGQAEARTYQAMKKHWLAIVLESFQHLKDEADLVLVEGAGSASEINLRANDIANMGFARAADVPVIVIGDIDRGGVIAQIAGTKLVITPQDAEMVVGFLVNRFRGDPDLFKEGMRQIEHFSGWRGLGLIPHCPAARDLPAEDAMALGRHLNGERSAHTKFKIVVPVLPGIANFDDLDPLRMERGVELIMIRPGTYLPVEADLVLLIGSKTTIADLVAFREAGWDVDLAAYVRRGGKVFGLCGGYQMLGENLRDPLGLEGPPSEVRGLGLLALETVFTQEKTLVAVEGVSLPDEVPFTGFEMHVGHTSGDDCARPFLRLTDGRQDGAVSKDGRIAGCYVHGLFGMDTQRRAFLARFGVAAGDFSYLEKVEAALDAVADHLAQHIDLDHLLTLAR.

One can recognise a GATase cobBQ-type domain in the interval 254 to 442; that stretch reads KFKIVVPVLP…VHGLFGMDTQ (189 aa). Cys336 acts as the Nucleophile in catalysis. Residue His434 is part of the active site.

This sequence belongs to the CobB/CobQ family. CobQ subfamily.

The protein operates within cofactor biosynthesis; adenosylcobalamin biosynthesis. Functionally, catalyzes amidations at positions B, D, E, and G on adenosylcobyrinic A,C-diamide. NH(2) groups are provided by glutamine, and one molecule of ATP is hydrogenolyzed for each amidation. This is Cobyric acid synthase from Beijerinckia indica subsp. indica (strain ATCC 9039 / DSM 1715 / NCIMB 8712).